We begin with the raw amino-acid sequence, 393 residues long: Chorismate synthase (393 aa).

NADP(+) contacts are provided by arginine 48 and arginine 54. FMN is bound by residues 125-127 (RSS), 238-239 (NA), glycine 278, 293-297 (KPTSS), and arginine 319. The segment at 355-393 (ACTTPKIPGHTGPREGQEEGPSDSEPKVEFADDPEPDEA) is disordered.

The protein belongs to the chorismate synthase family. As to quaternary structure, homotetramer. Requires FMNH2 as cofactor.

It carries out the reaction 5-O-(1-carboxyvinyl)-3-phosphoshikimate = chorismate + phosphate. It functions in the pathway metabolic intermediate biosynthesis; chorismate biosynthesis; chorismate from D-erythrose 4-phosphate and phosphoenolpyruvate: step 7/7. Functionally, catalyzes the anti-1,4-elimination of the C-3 phosphate and the C-6 proR hydrogen from 5-enolpyruvylshikimate-3-phosphate (EPSP) to yield chorismate, which is the branch point compound that serves as the starting substrate for the three terminal pathways of aromatic amino acid biosynthesis. This reaction introduces a second double bond into the aromatic ring system. The polypeptide is Chorismate synthase (Nitrosospira multiformis (strain ATCC 25196 / NCIMB 11849 / C 71)).